We begin with the raw amino-acid sequence, 531 residues long: Lysine--tRNA ligase, mitochondrial (531 aa).

The transit peptide at 1–18 (MISRGLLSKGILSIIKRK) directs the protein to the mitochondrion.

It belongs to the class-II aminoacyl-tRNA synthetase family.

It is found in the mitochondrion. It catalyses the reaction tRNA(Lys) + L-lysine + ATP = L-lysyl-tRNA(Lys) + AMP + diphosphate. The chain is Lysine--tRNA ligase, mitochondrial (msk1) from Schizosaccharomyces pombe (strain 972 / ATCC 24843) (Fission yeast).